The chain runs to 181 residues: Peptidyl-prolyl cis-trans isomerase H (181 aa).

The PPIase cyclophilin-type domain maps to 17 to 180 (FFDITLGGES…QDVTIIQCGE (164 aa)).

Belongs to the cyclophilin-type PPIase family. PPIase H subfamily.

It localises to the nucleus. The enzyme catalyses [protein]-peptidylproline (omega=180) = [protein]-peptidylproline (omega=0). PPIases accelerate the folding of proteins. It catalyzes the cis-trans isomerization of proline imidic peptide bonds in oligopeptides. The sequence is that of Peptidyl-prolyl cis-trans isomerase H (cyp3) from Aspergillus oryzae (strain ATCC 42149 / RIB 40) (Yellow koji mold).